A 265-amino-acid chain; its full sequence is Synaptoporin (265 aa).

Topologically, residues 1 to 4 (MCMV) are cytoplasmic. An MARVEL domain is found at 1-202 (MCMVIFAPLF…NIWFVFKETG (202 aa)). A helical transmembrane segment spans residues 5 to 25 (IFAPLFAMFAFATCGGYSGGL). Over 26–81 (RLSVDCVNKTESNLSIDIAFAYPFRLQQVTFEVPTCEGKEQQKLALVGDSSSSAEF) the chain is Vesicular. N33 and N38 each carry an N-linked (GlcNAc...) asparagine glycan. The chain crosses the membrane as a helical span at residues 82–102 (FVTVAVFAFLYSLAATVVYIF). The Cytoplasmic segment spans residues 103–114 (FQNKYRENNRGP). The helical transmembrane segment at 115–135 (LIDFIVTVVFSFLWLVGSSAW) threads the bilayer. The Vesicular portion of the chain corresponds to 136 to 177 (AKGLSDVKVATDPKEVLLLMSACKQPSNKCMAVHSPVMSSLN). Residues 178–198 (TSVVFGFLNFILWAGNIWFVF) traverse the membrane as a helical segment. Over 199-265 (KETGWHSSGQ…SGPTSFNNQI (67 aa)) the chain is Cytoplasmic. Tandem repeats lie at residues 210–214 (YLSDP), 222–226 (YNQGR), 227–231 (YNQES), 232–236 (YGSSG), and 238–242 (YSQQA). Residues 210-242 (YLSDPMEKHSSSYNQGRYNQESYGSSGGYSQQA) are 5 X approximate repeats. S212 is subject to Phosphoserine. Residues 221 to 230 (SYNQGRYNQE) show a composition bias toward polar residues. Residues 221–265 (SYNQGRYNQESYGSSGGYSQQANLGPTSDEFGQQPSGPTSFNNQI) are disordered. The segment covering 240 to 265 (QQANLGPTSDEFGQQPSGPTSFNNQI) has biased composition (polar residues).

The protein belongs to the synaptophysin/synaptobrevin family.

It is found in the cytoplasmic vesicle. The protein resides in the secretory vesicle. It localises to the synaptic vesicle membrane. The protein localises to the synapse. Its subcellular location is the synaptosome. Its function is as follows. Intrinsic membrane protein of small synaptic vesicles. Probable vesicular channel protein. This chain is Synaptoporin (Synpr), found in Mus musculus (Mouse).